A 440-amino-acid polypeptide reads, in one-letter code: Chromosome partition protein MukF (440 aa).

The segment at 208 to 236 (LSETSGTLRELQDTLEAAGDKLQANLLQI) is leucine-zipper.

It belongs to the MukF family. In terms of assembly, interacts, and probably forms a ternary complex, with MukE and MukB via its C-terminal region. The complex formation is stimulated by calcium or magnesium. It is required for an interaction between MukE and MukB.

It is found in the cytoplasm. The protein localises to the nucleoid. Its function is as follows. Involved in chromosome condensation, segregation and cell cycle progression. May participate in facilitating chromosome segregation by condensation DNA from both sides of a centrally located replisome during cell division. Not required for mini-F plasmid partitioning. Probably acts via its interaction with MukB and MukE. Overexpression results in anucleate cells. It has a calcium binding activity. The protein is Chromosome partition protein MukF of Cronobacter sakazakii (strain ATCC BAA-894) (Enterobacter sakazakii).